A 609-amino-acid chain; its full sequence is UvrABC system protein C (609 aa).

The region spanning 22–100 is the GIY-YIG domain; it reads EKPGVYQYLN…IKKYKPRYNV (79 aa). A UVR domain is found at 214–249; the sequence is QDISRMLVEKMQELANEMKFEEAQKIKEKYLLIENY.

This sequence belongs to the UvrC family. Interacts with UvrB in an incision complex.

The protein resides in the cytoplasm. Its function is as follows. The UvrABC repair system catalyzes the recognition and processing of DNA lesions. UvrC both incises the 5' and 3' sides of the lesion. The N-terminal half is responsible for the 3' incision and the C-terminal half is responsible for the 5' incision. The chain is UvrABC system protein C from Bacteroides thetaiotaomicron (strain ATCC 29148 / DSM 2079 / JCM 5827 / CCUG 10774 / NCTC 10582 / VPI-5482 / E50).